The sequence spans 176 residues: UBA-like domain-containing protein 1 (176 aa).

2 stretches are compositionally biased toward low complexity: residues 88–105 (ESFH…TSAT) and 120–137 (TPSW…QHLQ). Residues 88–176 (ESFHSGGSSG…RAHPAMEAER (89 aa)) form a disordered region. Positions 138–150 (PQPPLWTPAPPSP) are enriched in pro residues. The segment covering 166–176 (PRAHPAMEAER) has biased composition (basic and acidic residues).

The protein belongs to the UBALD family.

The sequence is that of UBA-like domain-containing protein 1 (Ubald1) from Rattus norvegicus (Rat).